The following is a 461-amino-acid chain: Phenolic glucoside malonyltransferase 1 (461 aa).

The Proton acceptor role is filled by histidine 167. The HXXXD motif signature appears at 167-171; it reads HAAQD. 281–282 serves as a coordination point for malonyl-CoA; the sequence is ST. Aspartate 400 functions as the Proton acceptor in the catalytic mechanism. A DFGWG motif motif is present at residues 400–404; it reads DFGWG.

It belongs to the plant acyltransferase family. Phenolic glucoside malonyltransferase subfamily. Expressed in all tissues. Most highly expressed in the abdomen and especially in the gut.

The catalysed reaction is a flavonol 3-O-beta-D-glucoside + malonyl-CoA = a flavonol 3-O-(6-O-malonyl-beta-D-glucoside) + CoA. It carries out the reaction kaempferol 3-O-beta-D-glucoside + malonyl-CoA = kaempferol 3-O-(6-O-malonyl-beta-D-glucoside) + CoA. It catalyses the reaction quercetin 3-O-beta-D-glucoside + malonyl-CoA = quercetin 3-O-(6-O-malonyl-beta-D-glucoside) + CoA. The enzyme catalyses a flavonol 7-O-beta-D-glucoside + malonyl-CoA = a flavonol 7-O-(6-O-malonyl-beta-D-glucoside) + CoA. The catalysed reaction is (2S)-naringenin 7-O-beta-D-glucoside + malonyl-CoA = (2S)-naringenin 7-O-(6-O-malonyl-beta-D-glucoside) + CoA. It carries out the reaction kaempferol 7-O-beta-D-glucoside + malonyl-CoA = kaempferol 7-O-(6-O-malonyl-beta-D-glucoside) + CoA. It catalyses the reaction apigenin 7-O-beta-D-glucoside + malonyl-CoA = apigenin 7-O-(6-O-malonyl-beta-D-glucoside) + CoA. The enzyme catalyses rhaponticin + malonyl-CoA = 6-O-malonyl-rhaponticin + CoA. Phenolic glucoside malonyltransferase that neutralizes phenolic glycosides in host plants. Catalyzes the transfer of a malonyl group from malonyl-CoA to the phenolic glycosides, leading to their detoxification. Phenolic glycosides, which are among the most abundant plant secondary metabolites, act as plant defense compounds: they strongly affect growth, development and behavior of insect herbivores. Has malonyltransferase activity against flavonoids kaempferol 3-O-glucoside, kaempferol 7-O-glucoside, isoquercetin (quercetin 3-O-beta-D-glucopyranoside), apigetrin (apigenin 7-O-beta-D-glucoside) and prunin (naringenin 7-O-beta-D-glucoside). Also has activity toward non-flavonoid rhaponticin, but with lower efficiency. The polypeptide is Phenolic glucoside malonyltransferase 1 (Bemisia tabaci (Sweetpotato whitefly)).